A 170-amino-acid polypeptide reads, in one-letter code: ATP synthase subunit b (170 aa).

Residues 30–50 (FFFVLAIFLVVLAVIGTFVVP) form a helical membrane-spanning segment.

It belongs to the ATPase B chain family. As to quaternary structure, F-type ATPases have 2 components, F(1) - the catalytic core - and F(0) - the membrane proton channel. F(1) has five subunits: alpha(3), beta(3), gamma(1), delta(1), epsilon(1). F(0) has three main subunits: a(1), b(2) and c(10-14). The alpha and beta chains form an alternating ring which encloses part of the gamma chain. F(1) is attached to F(0) by a central stalk formed by the gamma and epsilon chains, while a peripheral stalk is formed by the delta and b chains.

Its subcellular location is the cell membrane. F(1)F(0) ATP synthase produces ATP from ADP in the presence of a proton or sodium gradient. F-type ATPases consist of two structural domains, F(1) containing the extramembraneous catalytic core and F(0) containing the membrane proton channel, linked together by a central stalk and a peripheral stalk. During catalysis, ATP synthesis in the catalytic domain of F(1) is coupled via a rotary mechanism of the central stalk subunits to proton translocation. Functionally, component of the F(0) channel, it forms part of the peripheral stalk, linking F(1) to F(0). The polypeptide is ATP synthase subunit b (Mycobacterium marinum (strain ATCC BAA-535 / M)).